Here is a 355-residue protein sequence, read N- to C-terminus: Peptide chain release factor 1 (355 aa).

The residue at position 233 (glutamine 233) is an N5-methylglutamine.

Belongs to the prokaryotic/mitochondrial release factor family. Methylated by PrmC. Methylation increases the termination efficiency of RF1.

Its subcellular location is the cytoplasm. Functionally, peptide chain release factor 1 directs the termination of translation in response to the peptide chain termination codons UAG and UAA. The chain is Peptide chain release factor 1 from Caldicellulosiruptor bescii (strain ATCC BAA-1888 / DSM 6725 / KCTC 15123 / Z-1320) (Anaerocellum thermophilum).